Reading from the N-terminus, the 365-residue chain is Putrescine 2-hydroxylase (365 aa).

The Rieske domain occupies 44 to 141 (GHELMVPEVG…LQNWNGLLFE (98 aa)). 4 residues coordinate [2Fe-2S] cluster: cysteine 81, histidine 83, cysteine 100, and histidine 103.

Belongs to the bacterial ring-hydroxylating dioxygenase alpha subunit family. The cofactor is [2Fe-2S] cluster.

Functionally, rieske-type iron sulfur protein that can catalyze in vitro the 2-hydroxylation of putrescine, forming 2-hydroxyputrescine. May be involved in the biosynthesis of the cyclic hydroxamate siderophore alcaligin. The protein is Putrescine 2-hydroxylase of Ralstonia nicotianae (strain ATCC BAA-1114 / GMI1000) (Ralstonia solanacearum).